A 376-amino-acid chain; its full sequence is N-acetyldiaminopimelate deacetylase (376 aa).

Asp-69 is an active-site residue. Glu-128 (proton acceptor) is an active-site residue.

This sequence belongs to the peptidase M20A family. N-acetyldiaminopimelate deacetylase subfamily.

It carries out the reaction N-acetyl-(2S,6S)-2,6-diaminopimelate + H2O = (2S,6S)-2,6-diaminopimelate + acetate. It functions in the pathway amino-acid biosynthesis; L-lysine biosynthesis via DAP pathway; LL-2,6-diaminopimelate from (S)-tetrahydrodipicolinate (acetylase route): step 3/3. Catalyzes the conversion of N-acetyl-diaminopimelate to diaminopimelate and acetate. The sequence is that of N-acetyldiaminopimelate deacetylase from Streptococcus pneumoniae serotype 4 (strain ATCC BAA-334 / TIGR4).